We begin with the raw amino-acid sequence, 337 residues long: Glyceraldehyde-3-phosphate dehydrogenase 1 (337 aa).

Residues 11–12 (RI), D33, and R78 contribute to the NAD(+) site. D-glyceraldehyde 3-phosphate contacts are provided by residues 149–151 (SCT), T180, 209–210 (TG), and R232. C150 serves as the catalytic Nucleophile. Position 318 (N318) interacts with NAD(+).

The protein belongs to the glyceraldehyde-3-phosphate dehydrogenase family. Homotetramer.

The protein localises to the cytoplasm. It catalyses the reaction D-glyceraldehyde 3-phosphate + phosphate + NAD(+) = (2R)-3-phospho-glyceroyl phosphate + NADH + H(+). It participates in carbohydrate degradation; glycolysis; pyruvate from D-glyceraldehyde 3-phosphate: step 1/5. This is Glyceraldehyde-3-phosphate dehydrogenase 1 (gpd1) from Agaricus bisporus (White button mushroom).